The following is a 202-amino-acid chain: B-cell CLL/lymphoma 7 protein family member B (202 aa).

A disordered region spans residues 53–202; sequence DSKEKEKSKS…PAVPQTASES (150 aa). The span at 90-99 shows a compositional bias: polar residues; it reads ENSNQSSVSD. The segment covering 107–123 has biased composition (low complexity); sequence SSTNSSPSPQQSESLSP. 7 positions are modified to phosphoserine: serine 114, serine 118, serine 120, serine 122, serine 127, serine 148, and serine 152.

It belongs to the BCL7 family.

Its function is as follows. Positive regulator of apoptosis. Plays a role in the Wnt signaling pathway, negatively regulating the expression of Wnt signaling components CTNNB1 and HMGA1. Involved in cell cycle progression, maintenance of the nuclear structure and stem cell differentiation. May play a role in lung tumor development or progression. The sequence is that of B-cell CLL/lymphoma 7 protein family member B (BCL7B) from Bos taurus (Bovine).